We begin with the raw amino-acid sequence, 309 residues long: UDP-3-O-acyl-N-acetylglucosamine deacetylase (309 aa).

Zn(2+) is bound by residues His-78, His-237, and Asp-241. His-264 functions as the Proton donor in the catalytic mechanism.

This sequence belongs to the LpxC family. Zn(2+) is required as a cofactor.

It catalyses the reaction a UDP-3-O-[(3R)-3-hydroxyacyl]-N-acetyl-alpha-D-glucosamine + H2O = a UDP-3-O-[(3R)-3-hydroxyacyl]-alpha-D-glucosamine + acetate. The protein operates within glycolipid biosynthesis; lipid IV(A) biosynthesis; lipid IV(A) from (3R)-3-hydroxytetradecanoyl-[acyl-carrier-protein] and UDP-N-acetyl-alpha-D-glucosamine: step 2/6. Its function is as follows. Catalyzes the hydrolysis of UDP-3-O-myristoyl-N-acetylglucosamine to form UDP-3-O-myristoylglucosamine and acetate, the committed step in lipid A biosynthesis. This chain is UDP-3-O-acyl-N-acetylglucosamine deacetylase, found in Methylobacillus flagellatus (strain ATCC 51484 / DSM 6875 / VKM B-1610 / KT).